A 171-amino-acid chain; its full sequence is 3-hydroxydecanoyl-[acyl-carrier-protein] dehydratase (171 aa).

The active site involves His-70.

It belongs to the thioester dehydratase family. FabA subfamily. In terms of assembly, homodimer.

It localises to the cytoplasm. It catalyses the reaction a (3R)-hydroxyacyl-[ACP] = a (2E)-enoyl-[ACP] + H2O. It carries out the reaction (3R)-hydroxydecanoyl-[ACP] = (2E)-decenoyl-[ACP] + H2O. The enzyme catalyses (2E)-decenoyl-[ACP] = (3Z)-decenoyl-[ACP]. It participates in lipid metabolism; fatty acid biosynthesis. In terms of biological role, necessary for the introduction of cis unsaturation into fatty acids. Catalyzes the dehydration of (3R)-3-hydroxydecanoyl-ACP to E-(2)-decenoyl-ACP and then its isomerization to Z-(3)-decenoyl-ACP. Can catalyze the dehydratase reaction for beta-hydroxyacyl-ACPs with saturated chain lengths up to 16:0, being most active on intermediate chain length. The chain is 3-hydroxydecanoyl-[acyl-carrier-protein] dehydratase from Xanthomonas oryzae pv. oryzae (strain MAFF 311018).